A 256-amino-acid chain; its full sequence is Deoxyribose-phosphate aldolase (256 aa).

The active-site Proton donor/acceptor is Asp-102. Lys-165 functions as the Schiff-base intermediate with acetaldehyde in the catalytic mechanism. The Proton donor/acceptor role is filled by Lys-197.

Belongs to the DeoC/FbaB aldolase family. DeoC type 2 subfamily.

The protein localises to the cytoplasm. It carries out the reaction 2-deoxy-D-ribose 5-phosphate = D-glyceraldehyde 3-phosphate + acetaldehyde. It participates in carbohydrate degradation; 2-deoxy-D-ribose 1-phosphate degradation; D-glyceraldehyde 3-phosphate and acetaldehyde from 2-deoxy-alpha-D-ribose 1-phosphate: step 2/2. Functionally, catalyzes a reversible aldol reaction between acetaldehyde and D-glyceraldehyde 3-phosphate to generate 2-deoxy-D-ribose 5-phosphate. The chain is Deoxyribose-phosphate aldolase from Shewanella baltica (strain OS223).